The following is a 207-amino-acid chain: ConoCAP (207 aa).

A signal peptide spans 1–21; sequence MVSLGHVLFVILLPVLLPVAA. A propeptide spanning residues 22-48 is cleaved from the precursor; sequence DDPDDQMLSQISLPSSSRSEYDDNDVS. Cysteine 53 and cysteine 59 form a disulfide bridge. Glycine amide is present on glycine 60. Positions 63–82 are excised as a propeptide; sequence HRDRSRRQERYGKRLIPVLA. Cysteine 87 and cysteine 92 are joined by a disulfide. Asparagine 94 bears the Asparagine amide mark. Residues 98-160 constitute a propeptide that is removed on maturation; that stretch reads SLSGAGPALS…RDPAASGDLS (63 aa). The disordered stretch occupies residues 131–155; it reads ARHEQQQQLLQQREQRGLESRDPAA. Over residues 143–152 the composition is skewed to basic and acidic residues; the sequence is REQRGLESRD. A disulfide bond links cysteine 165 and cysteine 171. Position 173 is a glycine amide (glycine 173). Positions 177–207 are excised as a propeptide; it reads TLYSPWLERMNEVADDRSARNALCTRLGWRE.

Expressed by the venom duct.

Its subcellular location is the secreted. Its function is as follows. In contrast to other members of the CCAP family which are cardio-accelerators, conoCAP-a decreases the heart frequency in Drosophila larvae (26%), rats and zebrafish embryos. It also reduces the blood pressure in rats. It decreases systolic calcium in ventricular cardiac myocytes, indicating that it may act via impairment of intracellular calcium trafficking. In terms of biological role, synthetic conoCAP-b decreases the heart frequency of 23% in Drosophila larvae. Synthetic conoCAP-c decreases the heart frequency of 12% in Drosophila larvae. This Conus villepinii (Villepin's cone) protein is ConoCAP (conoCAP).